The primary structure comprises 324 residues: UDP-N-acetylenolpyruvoylglucosamine reductase (324 aa).

Positions 39 to 220 (RTGGLAELFY…RAAMHEVALH (182 aa)) constitute an FAD-binding PCMH-type domain. Arg-185 is a catalytic residue. Ser-234 serves as the catalytic Proton donor. Residue Glu-304 is part of the active site.

The protein belongs to the MurB family. The cofactor is FAD.

It is found in the cytoplasm. The catalysed reaction is UDP-N-acetyl-alpha-D-muramate + NADP(+) = UDP-N-acetyl-3-O-(1-carboxyvinyl)-alpha-D-glucosamine + NADPH + H(+). Its pathway is cell wall biogenesis; peptidoglycan biosynthesis. Cell wall formation. This is UDP-N-acetylenolpyruvoylglucosamine reductase from Bartonella bacilliformis (strain ATCC 35685 / KC583 / Herrer 020/F12,63).